A 1093-amino-acid polypeptide reads, in one-letter code: Electroneutral sodium bicarbonate exchanger 1 (1093 aa).

Disordered regions lie at residues 1–25 (MPAAGSNEPDGVLSYQRPDEEAVVD) and 55–95 (PLGR…HDTP). The Extracellular portion of the chain corresponds to 1–478 (MPAAGSNEPD…DYRDALSLQC (478 aa)). Residues 59-77 (QSHRHHRTHGQKHRRRGRG) are compositionally biased toward basic residues. Zn(2+)-binding residues include Phe-167 and Leu-169. The VTVLP; mediates dimerization signature appears at 340–344 (LFILL). A helical transmembrane segment spans residues 479 to 499 (LASFLFLYCACMSPVITFGGL). The Cytoplasmic segment spans residues 500 to 523 (LGEATEGRISAIESLFGASMTGIA). Residues 524–544 (YSLFAGQALTILGSTGPVLVF) traverse the membrane as a helical segment. Topologically, residues 545 to 565 (EKILFKFCKDYALSYLSLRAC) are extracellular. Residues 566 to 586 (IGLWTAFLCIVLVATDASSLV) form a helical membrane-spanning segment. Over 587–595 (CYITRFTEE) the chain is Cytoplasmic. The chain crosses the membrane as a helical span at residues 596–616 (AFASLICIIFIYEAIEKLIHL). Residues 617 to 687 (AETYPIHMHS…EFMGSACGHH (71 aa)) are Extracellular-facing. 2 disulfides stabilise this stretch: Cys-636-Cys-684 and Cys-638-Cys-672. Asn-646 carries an N-linked (GlcNAc) asparagine glycan. The chain crosses the membrane as a helical span at residues 688 to 708 (GPYTPDVLFWSCILFFTTFIL). Residues 709–731 (SSTLKTFKTSRYFPTRVRSMVSD) are Cytoplasmic-facing. Residues 732-752 (FAVFLTIFTMVIIDFLIGVPS) form a helical membrane-spanning segment. At 753-778 (PKLQVPSVFKPTRDDRGWIINPIGPN) the chain is on the extracellular side. Residues 779–799 (PWWTVIAAIIPALLCTILIFM) form a helical membrane-spanning segment. Residues 800–824 (DQQITAVIINRKEHKLKKGCGYHLD) lie on the Cytoplasmic side of the membrane. The helical transmembrane segment at 825 to 845 (LLMVAIMLGVCSIMGLPWFVA) threads the bilayer. Residues 846–881 (ATVLSITHVNSLKLESECSAPGEQPKFLGIREQRVT) lie on the Extracellular side of the membrane. Residues 882 to 902 (GLMIFVLMGCSVFMTAILKFI) form a helical membrane-spanning segment. Residues 903-904 (PM) are Cytoplasmic-facing. The helical transmembrane segment at 905–925 (PVLYGVFLYMGVSSLQGIQFF) threads the bilayer. Residues 926-962 (DRLKLFGMPAKHQPDFIYLRHVPLRKVHLFTLIQLTC) are Extracellular-facing. The chain crosses the membrane as a helical span at residues 963-983 (LVLLWVIKASPAAIVFPMMVL). Residues 984-1093 (ALVFVRKVMD…GNAKEKSLFN (110 aa)) lie on the Cytoplasmic side of the membrane. Positions 1010–1036 (ESKKKKLDDAKKKAKEEEEAEKMLEIG) form a coiled coil.

The protein belongs to the anion exchanger (TC 2.A.31) family. Homodimer. In terms of tissue distribution, expressed in the pyramidal cells of the hippocampus (at protein level). Highly expressed in all major regions of the brain, spinal column and in testis, and moderate levels in trachea, thyroid and medulla region of kidney. Low expression levels observed in pancreas and kidney cortex. As to expression, expressed in the brain. Expressed in the brain, heart and kidney.

The protein localises to the apical cell membrane. It is found in the basolateral cell membrane. The protein resides in the cytoplasmic vesicle. It localises to the secretory vesicle. Its subcellular location is the synaptic vesicle membrane. The protein localises to the cell membrane. It carries out the reaction 2 hydrogencarbonate(out) + chloride(in) + Na(+)(out) = 2 hydrogencarbonate(in) + chloride(out) + Na(+)(in). Its activity is regulated as follows. Activity is inhibited by 4,4'-Di-isothiocyanatostilbene-2,2'-disulfonic acid (DIDS - an inhibitor of several anion channels and transporters). Activity is inhibited by 4,4'-Di-isothiocyanatostilbene-2,2'-disulfonic acid (DIDS - an inhibitor of several anion channels and transporters). Zinc-binding negatively regulates its activity. Mediates electroneutral sodium- and carbonate-dependent chloride-HCO3(-) exchange with a Na(+):HCO3(-) stoichiometry of 2:1. Plays a major role in pH regulation in neurons. Mediates sodium reabsorption in the renal cortical collecting ducts. In Homo sapiens (Human), this protein is Electroneutral sodium bicarbonate exchanger 1.